A 353-amino-acid polypeptide reads, in one-letter code: Inactive ubiquitin thioesterase OTULINL (353 aa).

The required for membrane binding stretch occupies residues 1–80 (MKATRSAPRE…KWWIGYLQRK (80 aa)). The 229-residue stretch at 125 to 353 (KCVRPVKRDN…NDHQYHIPVF (229 aa)) folds into the OTU domain.

Belongs to the peptidase C65 family. Otulin subfamily. In terms of assembly, does not bind ubiquitin or ubiquitin-like proteins.

Its subcellular location is the cytoplasm. It is found in the endoplasmic reticulum membrane. The protein resides in the nucleus envelope. Functionally, lacks deubiquitinase activity. In Rattus norvegicus (Rat), this protein is Inactive ubiquitin thioesterase OTULINL.